The following is a 394-amino-acid chain: 4-hydroxyphenylpyruvate dioxygenase (394 aa).

VOC domains lie at Ser-18 to Tyr-149 and Phe-181 to Lys-339. Positions 184, 267, and 350 each coordinate Fe cation.

This sequence belongs to the 4HPPD family. In terms of assembly, homodimer. It depends on Fe cation as a cofactor.

The protein localises to the cytoplasm. It localises to the endoplasmic reticulum membrane. Its subcellular location is the golgi apparatus membrane. It catalyses the reaction 3-(4-hydroxyphenyl)pyruvate + O2 = homogentisate + CO2. Its pathway is amino-acid degradation; L-phenylalanine degradation; acetoacetate and fumarate from L-phenylalanine: step 3/6. Catalyzes the conversion of 4-hydroxyphenylpyruvic acid to homogentisic acid, one of the steps in tyrosine catabolism. The sequence is that of 4-hydroxyphenylpyruvate dioxygenase (hpd) from Xenopus tropicalis (Western clawed frog).